Consider the following 296-residue polypeptide: 4-hydroxybenzoate octaprenyltransferase (296 aa).

A run of 8 helical transmembrane segments spans residues 23–43 (IGIL…SPGW), 46–66 (GLVL…GCVM), 99–119 (LALA…PLVV), 141–161 (IPQA…FAAI), 163–183 (GQLP…AIAY), 211–231 (DVFA…WVGV), 237–257 (WPYF…YALI), and 265–285 (CFKA…GVLA).

The protein belongs to the UbiA prenyltransferase family. It depends on Mg(2+) as a cofactor.

The protein resides in the cell inner membrane. The enzyme catalyses all-trans-octaprenyl diphosphate + 4-hydroxybenzoate = 4-hydroxy-3-(all-trans-octaprenyl)benzoate + diphosphate. Its pathway is cofactor biosynthesis; ubiquinone biosynthesis. Its function is as follows. Catalyzes the prenylation of para-hydroxybenzoate (PHB) with an all-trans polyprenyl group. Mediates the second step in the final reaction sequence of ubiquinone-8 (UQ-8) biosynthesis, which is the condensation of the polyisoprenoid side chain with PHB, generating the first membrane-bound Q intermediate 3-octaprenyl-4-hydroxybenzoate. The protein is 4-hydroxybenzoate octaprenyltransferase of Methylobacillus flagellatus (strain ATCC 51484 / DSM 6875 / VKM B-1610 / KT).